The sequence spans 419 residues: DNA-directed RNA polymerase I subunit RPA49 (419 aa).

Residues S35 and S163 each carry the phosphoserine modification. Position 373 is an N6-acetyllysine (K373). Residues 397 to 419 are disordered; the sequence is GTLSLPLPPAQTSDRLAKRRKIT.

Belongs to the eukaryotic RPA49/POLR1E RNA polymerase subunit family. In terms of assembly, component of the RNA polymerase I (Pol I) complex consisting of 13 subunits: a ten-subunit catalytic core composed of POLR1A/RPA1, POLR1B/RPA2, POLR1C/RPAC1, POLR1D/RPAC2, POLR1H/RPA12, POLR2E/RPABC1, POLR2F/RPABC2, POLR2H/RPABC3, POLR2K/RPABC4 and POLR2L/RPABC5; a mobile stalk subunit POLR1F/RPA43 protruding from the core and additional subunits homologous to general transcription factors POLR1E/RPA49 and POLR1G/RPA34. Forms a heterodimer with POLR1G/RPA34. Interacts with POLR1G. Also binds UBTF/UBF. Interacts with PWP1. Acetylated at Lys-373 by CREBBP/CBP, leading to decreased RNA polymerase I transcription. In normal conditions, deacetylated by SIRT7, promoting the association of RNA polymerase I with the rDNA promoter region and coding region. In response to stress, SIRT7 is released from nucleoli leading to hyperacetylation of POLR1E/PAF53 and decreased association of RNA polymerase I with the rDNA promoter region.

The protein localises to the nucleus. Its subcellular location is the nucleolus. Component of RNA polymerase I (Pol I), a DNA-dependent RNA polymerase which synthesizes ribosomal RNA precursors using the four ribonucleoside triphosphates as substrates. Appears to be involved in the formation of the initiation complex at the promoter by mediating the interaction between Pol I and UBTF/UBF. The polypeptide is DNA-directed RNA polymerase I subunit RPA49 (POLR1E) (Homo sapiens (Human)).